The chain runs to 462 residues: Cysteine desulfurase, mitochondrial (462 aa).

Pyridoxal 5'-phosphate is bound by residues 132–133 (AT), N212, Q240, and 260–262 (SGH). Position 263 is an N6-(pyridoxal phosphate)lysine (K263). T300 is a pyridoxal 5'-phosphate binding site. C386 acts as the Cysteine persulfide intermediate in catalysis. Residue C386 coordinates [2Fe-2S] cluster.

This sequence belongs to the class-V pyridoxal-phosphate-dependent aminotransferase family. NifS/IscS subfamily. As to quaternary structure, component of the mitochondrial core iron-sulfur cluster (ISC) assembly complex at least composed of the cystein desulfurase Nfs1, the scaffold protein IscU, the accessory protein bcn92/Isd11/Lyrm4, and probably fh/frataxin. Interacts with bcn92/Isd11/Lyrm4 and IscU. It depends on pyridoxal 5'-phosphate as a cofactor. As to expression, ubiquitous expression at high levels in any life stage.

Its subcellular location is the mitochondrion. It localises to the nucleus. The catalysed reaction is (sulfur carrier)-H + L-cysteine = (sulfur carrier)-SH + L-alanine. Active when in complex with bcn92/Isd11/Lyrm4. L-cysteine binding kinetics are reduced in the presence of bcn92/Isd11/Lyrm4 and IscU. Activity is regulated by other components of the mitochondrial core iron-sulfur cluster (ISC) complex; Activity is reduced in the presence of IscU but enhanced when both IscU and fh/frataxin are present. Its function is as follows. Catalyzes the removal of elemental sulfur from cysteine to produce alanine. It supplies the inorganic sulfur for iron-sulfur (Fe-S) clusters. This Drosophila melanogaster (Fruit fly) protein is Cysteine desulfurase, mitochondrial.